A 105-amino-acid polypeptide reads, in one-letter code: 3-phenylpropionate/cinnamic acid dioxygenase ferredoxin subunit (105 aa).

Residues 4–99 (LFVCTVEELP…VVVKDGNIYI (96 aa)) form the Rieske domain. [2Fe-2S] cluster-binding residues include cysteine 42, histidine 44, cysteine 62, and histidine 65.

This sequence belongs to the bacterial ring-hydroxylating dioxygenase ferredoxin component family. As to quaternary structure, this dioxygenase system consists of four proteins: the two subunits of the hydroxylase component (HcaE and HcaF), a ferredoxin (HcaC) and a ferredoxin reductase (HcaD). Requires [2Fe-2S] cluster as cofactor.

The protein operates within aromatic compound metabolism; 3-phenylpropanoate degradation. In terms of biological role, part of the multicomponent 3-phenylpropionate dioxygenase, that converts 3-phenylpropionic acid (PP) and cinnamic acid (CI) into 3-phenylpropionate-dihydrodiol (PP-dihydrodiol) and cinnamic acid-dihydrodiol (CI-dihydrodiol), respectively. This protein seems to be a 2Fe-2S ferredoxin. The chain is 3-phenylpropionate/cinnamic acid dioxygenase ferredoxin subunit from Photorhabdus laumondii subsp. laumondii (strain DSM 15139 / CIP 105565 / TT01) (Photorhabdus luminescens subsp. laumondii).